Here is a 302-residue protein sequence, read N- to C-terminus: Glycine--tRNA ligase alpha subunit (302 aa).

This sequence belongs to the class-II aminoacyl-tRNA synthetase family. Tetramer of two alpha and two beta subunits.

Its subcellular location is the cytoplasm. The enzyme catalyses tRNA(Gly) + glycine + ATP = glycyl-tRNA(Gly) + AMP + diphosphate. In Baumannia cicadellinicola subsp. Homalodisca coagulata, this protein is Glycine--tRNA ligase alpha subunit.